The sequence spans 370 residues: CCA-adding enzyme (370 aa).

Residues glycine 8 and arginine 11 each coordinate ATP. 2 residues coordinate CTP: glycine 8 and arginine 11. Mg(2+) is bound by residues aspartate 21 and aspartate 23. 3 residues coordinate ATP: arginine 91, arginine 137, and arginine 140. 3 residues coordinate CTP: arginine 91, arginine 137, and arginine 140.

This sequence belongs to the tRNA nucleotidyltransferase/poly(A) polymerase family. Bacterial CCA-adding enzyme type 2 subfamily. Mg(2+) is required as a cofactor.

It catalyses the reaction a tRNA precursor + 2 CTP + ATP = a tRNA with a 3' CCA end + 3 diphosphate. The enzyme catalyses a tRNA with a 3' CCA end + 2 CTP + ATP = a tRNA with a 3' CCACCA end + 3 diphosphate. Functionally, catalyzes the addition and repair of the essential 3'-terminal CCA sequence in tRNAs without using a nucleic acid template. Adds these three nucleotides in the order of C, C, and A to the tRNA nucleotide-73, using CTP and ATP as substrates and producing inorganic pyrophosphate. tRNA 3'-terminal CCA addition is required both for tRNA processing and repair. Also involved in tRNA surveillance by mediating tandem CCA addition to generate a CCACCA at the 3' terminus of unstable tRNAs. While stable tRNAs receive only 3'-terminal CCA, unstable tRNAs are marked with CCACCA and rapidly degraded. This Pseudomonas putida (strain W619) protein is CCA-adding enzyme.